Reading from the N-terminus, the 78-residue chain is Small ribosomal subunit protein uS15 (78 aa).

This sequence belongs to the universal ribosomal protein uS15 family. Part of the 30S ribosomal subunit. Forms a bridge to the 50S subunit in the 70S ribosome, contacting the 23S rRNA.

In terms of biological role, one of the primary rRNA binding proteins, it binds directly to 16S rRNA where it helps nucleate assembly of the platform of the 30S subunit by binding and bridging several RNA helices of the 16S rRNA. Its function is as follows. Forms an intersubunit bridge (bridge B4) with the 23S rRNA of the 50S subunit in the ribosome. This is Small ribosomal subunit protein uS15 from Karelsulcia muelleri (strain GWSS) (Sulcia muelleri).